The chain runs to 72 residues: Translation initiation factor IF-1 (72 aa).

The S1-like domain occupies 1–72 (MAKEDNIEMQ…SKGRIVFRSR (72 aa)).

This sequence belongs to the IF-1 family. Component of the 30S ribosomal translation pre-initiation complex which assembles on the 30S ribosome in the order IF-2 and IF-3, IF-1 and N-formylmethionyl-tRNA(fMet); mRNA recruitment can occur at any time during PIC assembly.

The protein resides in the cytoplasm. Its function is as follows. One of the essential components for the initiation of protein synthesis. Stabilizes the binding of IF-2 and IF-3 on the 30S subunit to which N-formylmethionyl-tRNA(fMet) subsequently binds. Helps modulate mRNA selection, yielding the 30S pre-initiation complex (PIC). Upon addition of the 50S ribosomal subunit IF-1, IF-2 and IF-3 are released leaving the mature 70S translation initiation complex. The polypeptide is Translation initiation factor IF-1 (Sodalis glossinidius (strain morsitans)).